The primary structure comprises 512 residues: Glucagon-like peptide 2 receptor (512 aa).

Residues 1-135 (MRRLWGPGTP…KQNVDHYHHT (135 aa)) are Extracellular-facing. Disulfide bonds link C43-C65, C56-C97, and C78-C119. A glycan (N-linked (GlcNAc...) asparagine) is linked at N73. The helical transmembrane segment at 136 to 160 (LLSTLQLMYTVGYSLSLISLFLALT) threads the bilayer. The Cytoplasmic segment spans residues 161-172 (LFLFLRKLHCTR). The chain crosses the membrane as a helical span at residues 173–197 (NYIHMNLFASFILRALVVLVKDMVF). The Extracellular segment spans residues 198–223 (YNSYSRRPDSESGWMSYLSEISASCR). The chain crosses the membrane as a helical span at residues 224–247 (SVQVLLHYFVGTNHLWLLVEGLYL). Over 248–261 (HALLEPTVLPERRL) the chain is Cytoplasmic. A helical transmembrane segment spans residues 262–283 (WPKYLVVGWAFPMLFVIPWIFV). Residues 284-301 (RASLENTGCWAVNENKKI) are Extracellular-facing. Residues 302–324 (WWIIRGPILLCVTVNFFIFLKIL) traverse the membrane as a helical segment. The Cytoplasmic segment spans residues 325-348 (KLLISKFRAHQMCFRDYKYRLAKS). A helical membrane pass occupies residues 349–367 (TLLLILLMGVHEFLFTFFT). Topologically, residues 368–379 (DDQVQGFSRLIR) are extracellular. A helical transmembrane segment spans residues 380-400 (LFIQLTLSSFHGFLVALQYGF). Residues 401 to 512 (ASREVKAELR…MEEILEESEI (112 aa)) are Cytoplasmic-facing. Residues 458 to 494 (SGVSSHLTAGNLRDHGAQPHRGRGAWPRASSLSESSE) are disordered.

It belongs to the G-protein coupled receptor 2 family.

The protein resides in the cell membrane. Its function is as follows. This is a receptor for glucagon-like peptide 2. The activity of this receptor is mediated by G proteins which activate adenylyl cyclase. The sequence is that of Glucagon-like peptide 2 receptor (Glp2r) from Mus musculus (Mouse).